Consider the following 275-residue polypeptide: Glycerol-3-phosphate dehydrogenase [NAD(P)+] (275 aa).

NADPH contacts are provided by Trp12, Arg32, and Lys105. 3 residues coordinate sn-glycerol 3-phosphate: Lys105, Gly133, and Thr135. Ala137 contributes to the NADPH binding site. Sn-glycerol 3-phosphate is bound by residues Lys188, Asp241, Ser251, Arg252, and Asn253. Lys188 functions as the Proton acceptor in the catalytic mechanism. Arg252 lines the NADPH pocket.

It belongs to the NAD-dependent glycerol-3-phosphate dehydrogenase family.

The protein resides in the cytoplasm. The enzyme catalyses sn-glycerol 3-phosphate + NAD(+) = dihydroxyacetone phosphate + NADH + H(+). It carries out the reaction sn-glycerol 3-phosphate + NADP(+) = dihydroxyacetone phosphate + NADPH + H(+). It functions in the pathway membrane lipid metabolism; glycerophospholipid metabolism. Its function is as follows. Catalyzes the reduction of the glycolytic intermediate dihydroxyacetone phosphate (DHAP) to sn-glycerol 3-phosphate (G3P), the key precursor for phospholipid synthesis. The polypeptide is Glycerol-3-phosphate dehydrogenase [NAD(P)+] (Paramagnetospirillum magneticum (strain ATCC 700264 / AMB-1) (Magnetospirillum magneticum)).